The sequence spans 930 residues: F-box only protein 11 (930 aa).

The interval 1 to 150 (MNSVRAANRR…RVSGKSQDLS (150 aa)) is disordered. Residues 7-16 (ANRRPRRVSR) show a composition bias toward basic residues. Positions 17–27 (PRPVQQQQQQP) are enriched in low complexity. The span at 28–73 (PQQPPPQPPQQQPPPQPPQQPPQQQPPPPPQQQPPPPPPPPPPPPQ) shows a compositional bias: pro residues. A compositionally biased stretch (polar residues) spans 117-132 (PTKSSMEGASTSTTEN). An F-box domain is found at 156-202 (QYLQEKLPDEVVLKIFSYLLEQDLCRAACVCKRFSELANDPILWKRL). PbH1 repeat units lie at residues 398–420 (GACP…YITD), 421–443 (HAQG…WVKN), 444–466 (HGNP…FTFD), 467–489 (HGMG…EVKA), 490–512 (YANP…YVHE), 513–535 (KGRG…WITS), 536–558 (NSDP…YIFG), 559–581 (DGRG…QIRT), 582–604 (NSCP…YVHE), 605–627 (KGQG…WVTT), 628–650 (GSTP…YFYD), 651–673 (NGHG…QIRT), 674–696 (GSNP…LVYN), 697–719 (SGLG…WIKT), 720–742 (DSNP…CIFN), 743–765 (GGRG…LIST), 766–788 (NSHP…EITN), 789–811 (HATA…FLAS), and 812–833 (GVNV…EKAV). The segment at 836–907 (GQCLYKISSY…LSNPCTLAGE (72 aa)) adopts a UBR-type zinc-finger fold.

Component of the SCF(FBXO11) complex consisting of CUL1, RBX1, SKP1 and FBXO11. Interacts with CIITA. At 9.5 dpc and 10.5 dpc, expression is restricted to developing heart tissue. By 11.5 dpc and 12.5 dpc, detected in liver and subsequently in muscle by 13.5 dpc. At 14.5 dpc, still detected in heart, liver and muscle and also in the developing secondary palate including the nasal, medial and oral epithelia of the palatal shelves. At 15.5 dpc and 16.5 dpc, expressed in lung, kidney, heart, liver, muscle and adrenal gland. At this time, fusion of the palate shelves has occurred, with expression confined to the nasal and oral epithelia. At 17.5 dpc, expression in the lung is confined to bronchial epithelial cells and is evident in bone marrow, skin, tissue macrophages, osteoblasts, kidney, liver and spleen. At 18.5 dpc, expressed in bone marrow, liver, kidney and muscle but decreases in heart and lung. At this time, first detected in the middle ear epithelium. At the newborn stage, expression is strong in the middle ear where it is confined to mucin-secreting cells, as well as persisting in bone marrow, kidney and liver. Middle ear expression persists in postnatal head tissue at 4 and 13 days after birth and has declined by 21 days after birth. In the adult, expression is seen in alveolar macrophages of the lung, glomeruli and collecting tubules of the kidney, midbrain, heart and muscle.

It localises to the nucleus. It is found in the chromosome. Its pathway is protein modification; protein ubiquitination. Its function is as follows. Substrate recognition component of a SCF (SKP1-CUL1-F-box protein) E3 ubiquitin-protein ligase complex which mediates the ubiquitination and subsequent proteasomal degradation of target proteins, such as DTL/CDT2, BCL6, SNAI1 and PRDM1/BLIMP1. The SCF(FBXO11) complex mediates ubiquitination and degradation of BCL6, thereby playing a role in the germinal center B-cells terminal differentiation toward memory B-cells and plasma cells. The SCF(FBXO11) complex also mediates ubiquitination and degradation of DTL, an important step for the regulation of TGF-beta signaling, cell migration and the timing of the cell-cycle progression and exit. The SCF(FBXO11) complex also catalyzes ubiquitination and degradation of GSK3B-phosphorylated SNAI1. Binds to and neddylates phosphorylated p53/TP53, inhibiting its transcriptional activity. Plays a role in the regulatiom of erythropoiesis but not myelopoiesis or megakaryopoiesis. Mechanistically, activates erythroid genes by mediating the degradation of BAHD1, a heterochromatin-associated protein that recruits corepressors to H3K27me3 marks. Participates in macrophage cell death and inflammation in response to bacterial toxins by regulating the expression of complement 5a receptor 1/C5AR1 and IL-1beta. Acts as a critical regulator to determine the level of MHC-II by mediating the recognition of degron at the P/S/T domain of CIITA leading to its ubiquitination and subsequent degradation via the proteasome. Participates in the antiviral repsonse by initiating the activation of TBK1-IRF3-IFN-I axis. Mediates the 'Lys-63'-linked ubiquitination of TRAF3 to strengthen the interaction between TRAF3 and TBK1. This is F-box only protein 11 from Mus musculus (Mouse).